The sequence spans 424 residues: CUGBP Elav-like family member 4 (424 aa).

The segment at 8-27 is disordered; the sequence is VANGQPDNSSLSSNPTGHMN. Residues 9 to 24 are compositionally biased toward polar residues; that stretch reads ANGQPDNSSLSSNPTG. 2 RRM domains span residues 47-128 and 342-417; these read IKLF…PADS and PQPP…LKRP.

Belongs to the CELF/BRUNOL family.

It is found in the nucleus. Its subcellular location is the cytoplasm. RNA-binding protein that may be implicated in the regulation of pre-mRNA alternative splicing. In Xenopus tropicalis (Western clawed frog), this protein is CUGBP Elav-like family member 4 (celf4).